A 512-amino-acid chain; its full sequence is ATP synthase subunit alpha 2 (512 aa).

169–176 (GDRQTGKT) contacts ATP.

The protein belongs to the ATPase alpha/beta chains family. In terms of assembly, F-type ATPases have 2 components, CF(1) - the catalytic core - and CF(0) - the membrane proton channel. CF(1) has five subunits: alpha(3), beta(3), gamma(1), delta(1), epsilon(1). CF(0) has four main subunits: a(1), b(1), b'(1) and c(9-12).

It localises to the cell inner membrane. It carries out the reaction ATP + H2O + 4 H(+)(in) = ADP + phosphate + 5 H(+)(out). Its function is as follows. Produces ATP from ADP in the presence of a proton gradient across the membrane. The alpha chain is a regulatory subunit. In Dinoroseobacter shibae (strain DSM 16493 / NCIMB 14021 / DFL 12), this protein is ATP synthase subunit alpha 2.